We begin with the raw amino-acid sequence, 257 residues long: 5'-nucleotidase SurE (257 aa).

The a divalent metal cation site is built by Asp13, Asp14, Ser44, and Asn100.

It belongs to the SurE nucleotidase family. It depends on a divalent metal cation as a cofactor.

The protein localises to the cytoplasm. The catalysed reaction is a ribonucleoside 5'-phosphate + H2O = a ribonucleoside + phosphate. Its function is as follows. Nucleotidase that shows phosphatase activity on nucleoside 5'-monophosphates. This Phocaeicola vulgatus (strain ATCC 8482 / DSM 1447 / JCM 5826 / CCUG 4940 / NBRC 14291 / NCTC 11154) (Bacteroides vulgatus) protein is 5'-nucleotidase SurE.